The chain runs to 111 residues: Large ribosomal subunit protein P2-2 (111 aa).

Positions 86 to 111 (APAAAAAKKDEPEEEADDDMGFGLFD) are disordered.

Belongs to the eukaryotic ribosomal protein P1/P2 family. In terms of assembly, P1 and P2 exist as dimers at the large ribosomal subunit. Phosphorylated.

Functionally, plays an important role in the elongation step of protein synthesis. The polypeptide is Large ribosomal subunit protein P2-2 (LIP') (Leishmania infantum).